The chain runs to 232 residues: Uracil phosphoribosyltransferase (232 aa).

38-42 is a binding site for GTP; it reads KGLVR. 5-phospho-alpha-D-ribose 1-diphosphate is bound by residues R87, R112, and 140–148; that span reads DPMIATGST. Uracil contacts are provided by residues I204 and 209 to 211; that span reads GDA. A 5-phospho-alpha-D-ribose 1-diphosphate-binding site is contributed by D210.

Belongs to the UPRTase family. Mg(2+) serves as cofactor.

The catalysed reaction is UMP + diphosphate = 5-phospho-alpha-D-ribose 1-diphosphate + uracil. It participates in pyrimidine metabolism; UMP biosynthesis via salvage pathway; UMP from uracil: step 1/1. With respect to regulation, allosterically activated by GTP. Its function is as follows. Catalyzes the conversion of uracil and 5-phospho-alpha-D-ribose 1-diphosphate (PRPP) to UMP and diphosphate. The polypeptide is Uracil phosphoribosyltransferase (Methanococcus vannielii (strain ATCC 35089 / DSM 1224 / JCM 13029 / OCM 148 / SB)).